A 334-amino-acid polypeptide reads, in one-letter code: tRNA N6-adenosine threonylcarbamoyltransferase (334 aa).

2 residues coordinate Fe cation: His107 and His111. Residues 129 to 133 (LVSGG), Asp162, Gly175, and Asn269 each bind substrate. Fe cation is bound at residue Asp297.

It belongs to the KAE1 / TsaD family. Fe(2+) is required as a cofactor.

The protein resides in the cytoplasm. The catalysed reaction is L-threonylcarbamoyladenylate + adenosine(37) in tRNA = N(6)-L-threonylcarbamoyladenosine(37) in tRNA + AMP + H(+). Functionally, required for the formation of a threonylcarbamoyl group on adenosine at position 37 (t(6)A37) in tRNAs that read codons beginning with adenine. Is involved in the transfer of the threonylcarbamoyl moiety of threonylcarbamoyl-AMP (TC-AMP) to the N6 group of A37, together with TsaE and TsaB. TsaD likely plays a direct catalytic role in this reaction. This is tRNA N6-adenosine threonylcarbamoyltransferase from Campylobacter concisus (strain 13826).